Consider the following 93-residue polypeptide: Small ribosomal subunit protein uS19c (93 aa).

Residues 73-93 (EFSPTRTFRGHTKSDKKSRRP) are disordered. The segment covering 80–93 (FRGHTKSDKKSRRP) has biased composition (basic residues).

It belongs to the universal ribosomal protein uS19 family.

It is found in the plastid. The protein localises to the chloroplast. Its function is as follows. Protein S19 forms a complex with S13 that binds strongly to the 16S ribosomal RNA. This Mesostigma viride (Green alga) protein is Small ribosomal subunit protein uS19c (rps19).